The primary structure comprises 214 residues: Nucleoside triphosphate pyrophosphatase (214 aa).

Asp-79 functions as the Proton acceptor in the catalytic mechanism.

This sequence belongs to the Maf family. A divalent metal cation is required as a cofactor.

It localises to the cytoplasm. The catalysed reaction is a ribonucleoside 5'-triphosphate + H2O = a ribonucleoside 5'-phosphate + diphosphate + H(+). The enzyme catalyses a 2'-deoxyribonucleoside 5'-triphosphate + H2O = a 2'-deoxyribonucleoside 5'-phosphate + diphosphate + H(+). Nucleoside triphosphate pyrophosphatase. May have a dual role in cell division arrest and in preventing the incorporation of modified nucleotides into cellular nucleic acids. The chain is Nucleoside triphosphate pyrophosphatase from Rhodococcus opacus (strain B4).